Reading from the N-terminus, the 392-residue chain is Formate-dependent phosphoribosylglycinamide formyltransferase (392 aa).

Residues 22–23 and E82 each bind N(1)-(5-phospho-beta-D-ribosyl)glycinamide; that span reads EL. ATP is bound by residues R114, K155, 160-165, 195-198, and E203; these read SSGKGQ and EGLV. One can recognise an ATP-grasp domain in the interval 119-308; that stretch reads RLAAETLSLP…EFALHVRAFL (190 aa). Residues E267 and E279 each coordinate Mg(2+). Residues D286, K355, and 362–363 each bind N(1)-(5-phospho-beta-D-ribosyl)glycinamide; that span reads RR.

The protein belongs to the PurK/PurT family. Homodimer.

It carries out the reaction N(1)-(5-phospho-beta-D-ribosyl)glycinamide + formate + ATP = N(2)-formyl-N(1)-(5-phospho-beta-D-ribosyl)glycinamide + ADP + phosphate + H(+). Its pathway is purine metabolism; IMP biosynthesis via de novo pathway; N(2)-formyl-N(1)-(5-phospho-D-ribosyl)glycinamide from N(1)-(5-phospho-D-ribosyl)glycinamide (formate route): step 1/1. In terms of biological role, involved in the de novo purine biosynthesis. Catalyzes the transfer of formate to 5-phospho-ribosyl-glycinamide (GAR), producing 5-phospho-ribosyl-N-formylglycinamide (FGAR). Formate is provided by PurU via hydrolysis of 10-formyl-tetrahydrofolate. The protein is Formate-dependent phosphoribosylglycinamide formyltransferase of Sodalis glossinidius (strain morsitans).